We begin with the raw amino-acid sequence, 394 residues long: 1-deoxy-D-xylulose 5-phosphate reductoisomerase (394 aa).

NADPH contacts are provided by Thr12, Gly13, Ser14, Ile15, Gly38, and Asn126. Lys127 provides a ligand contact to 1-deoxy-D-xylulose 5-phosphate. Glu128 is a binding site for NADPH. Asp151 lines the Mn(2+) pocket. The 1-deoxy-D-xylulose 5-phosphate site is built by Ser152, Glu153, Ser177, and His200. Glu153 is a binding site for Mn(2+). An NADPH-binding site is contributed by Gly206. 1-deoxy-D-xylulose 5-phosphate-binding residues include Ser213, Asn218, Lys219, and Glu222. Glu222 contacts Mn(2+).

Belongs to the DXR family. Requires Mg(2+) as cofactor. The cofactor is Mn(2+).

It carries out the reaction 2-C-methyl-D-erythritol 4-phosphate + NADP(+) = 1-deoxy-D-xylulose 5-phosphate + NADPH + H(+). It participates in isoprenoid biosynthesis; isopentenyl diphosphate biosynthesis via DXP pathway; isopentenyl diphosphate from 1-deoxy-D-xylulose 5-phosphate: step 1/6. Functionally, catalyzes the NADPH-dependent rearrangement and reduction of 1-deoxy-D-xylulose-5-phosphate (DXP) to 2-C-methyl-D-erythritol 4-phosphate (MEP). The protein is 1-deoxy-D-xylulose 5-phosphate reductoisomerase of Beutenbergia cavernae (strain ATCC BAA-8 / DSM 12333 / CCUG 43141 / JCM 11478 / NBRC 16432 / NCIMB 13614 / HKI 0122).